A 582-amino-acid polypeptide reads, in one-letter code: Protein NRT1/ PTR FAMILY 5.2 (582 aa).

11 helical membrane-spanning segments follow: residues Trp77–Gly97, Ile100–Val120, Ala141–Gly161, Phe189–Val209, Trp217–Leu237, Pro334–Val354, Ile370–Tyr390, Ile408–Ala428, Leu452–Phe472, Gly493–Val515, and Tyr538–Val558.

This sequence belongs to the major facilitator superfamily. Proton-dependent oligopeptide transporter (POT/PTR) (TC 2.A.17) family. Expressed in roots. Detected in shoots, leaves and flowers.

The protein localises to the membrane. In terms of biological role, peptide transporter involved in stress tolerance in seeds during germination and in defense against virulent bacterial pathogens. In Arabidopsis thaliana (Mouse-ear cress), this protein is Protein NRT1/ PTR FAMILY 5.2 (NPF5.2).